The following is a 772-amino-acid chain: Acetamidase regulatory protein (772 aa).

Residues 1–16 show a composition bias toward polar residues; it reads MSSTAQKNSLSPTGNG. Positions 1–23 are disordered; the sequence is MSSTAQKNSLSPTGNGVTKRKSG. Residues 26–59 constitute a DNA-binding region (zn(2)-C6 fungal-type); sequence ACVHCHRRKVRCDARIVGLPCSNCRSSGKTDCRI. 3 disordered regions span residues 78 to 99, 114 to 148, and 627 to 690; these read RCRP…TISE, AAAP…QECH, and ATSE…QTAV. Positions 114-123 are enriched in low complexity; the sequence is AAAPPASVAP. 2 stretches are compositionally biased toward polar residues: residues 124–144 and 634–658; these read NVQS…SPQA and PFSS…QHSS. The span at 671-686 shows a compositional bias: low complexity; that stretch reads LLPSYDSPTPDSTSLP.

It localises to the nucleus. Functionally, positively regulates the expression of genes involved in the catabolism of certain amides, omega amino acids, and lactams. The polypeptide is Acetamidase regulatory protein (amdR) (Aspergillus fumigatus (strain ATCC MYA-4609 / CBS 101355 / FGSC A1100 / Af293) (Neosartorya fumigata)).